The following is a 468-amino-acid chain: FAD-linked oxidoreductase hasG (468 aa).

An FAD-binding PCMH-type domain is found at 37–211 (LGKIPAAVVQ…VEATFRAYPW (175 aa)).

The protein belongs to the oxygen-dependent FAD-linked oxidoreductase family. FAD is required as a cofactor.

The protein operates within secondary metabolite biosynthesis. Functionally, FAD-linked oxidoreductase; part of the gene cluster that mediates the biosynthesis of hexadehydro-astechrome (HAS), a tryptophan-derived iron(III)-complex that acts as a virulence factor in infected mice. Within the pathway, hasG converts the prenyl to a methylbutadienyl side chain. The HAS biosynthesis begins with the synthesis of a tethered Trp-Ala dipeptide by the NRPS hasD. The 7-dimethylallyltryptophan synthase hasE then catalyzes the prenylation of the hasD-tethered tryptophan or the resulting tethered Trp-Ala dipeptide at the C-7 position of the indole moiety. HAS biosynthesis continues via tethered intermediates with the succesive actions of the cytochrome P450 monooxygenase hasH, the O-methyltransferase hasC, and the FAD-linked oxidoreductase hasG. The resulting O-methylated diketopiperazine is then released from hasD. Finally, three O-methylated diketopiperazine molecules assemble in a trimeric complex with Fe(III) to produce hexadehydro-astechrome. This is FAD-linked oxidoreductase hasG from Aspergillus fumigatus (strain CBS 144.89 / FGSC A1163 / CEA10) (Neosartorya fumigata).